The primary structure comprises 94 residues: Large ribosomal subunit protein uL23 (94 aa).

It belongs to the universal ribosomal protein uL23 family. Part of the 50S ribosomal subunit. Contacts protein L29, and trigger factor when it is bound to the ribosome.

Its function is as follows. One of the early assembly proteins it binds 23S rRNA. One of the proteins that surrounds the polypeptide exit tunnel on the outside of the ribosome. Forms the main docking site for trigger factor binding to the ribosome. This chain is Large ribosomal subunit protein uL23, found in Ligilactobacillus salivarius (strain UCC118) (Lactobacillus salivarius).